We begin with the raw amino-acid sequence, 663 residues long: DNA topoisomerase 4 subunit B (663 aa).

ATP is bound by residues tyrosine 7, asparagine 47, aspartate 74, 114–120, and lysine 341; that span reads GLHGVGA. The segment at 386–418 is disordered; that stretch reads REAARKAREDARSGKKNKRKDTLLSGKLTPAQS. Residues 387 to 398 show a composition bias toward basic and acidic residues; it reads EAARKAREDARS. The region spanning 424 to 538 is the Toprim domain; the sequence is NELYLVEGDS…AGRVFIALPP (115 aa). Mg(2+)-binding residues include glutamate 430, aspartate 503, and aspartate 505.

Belongs to the type II topoisomerase family. ParE type 2 subfamily. In terms of assembly, heterotetramer composed of ParC and ParE. Mg(2+) is required as a cofactor. Requires Mn(2+) as cofactor. It depends on Ca(2+) as a cofactor.

The enzyme catalyses ATP-dependent breakage, passage and rejoining of double-stranded DNA.. Functionally, topoisomerase IV is essential for chromosome segregation. It relaxes supercoiled DNA. Performs the decatenation events required during the replication of a circular DNA molecule. The sequence is that of DNA topoisomerase 4 subunit B from Staphylococcus aureus (strain MRSA252).